The chain runs to 89 residues: Small ribosomal subunit protein uS15 (89 aa).

The protein belongs to the universal ribosomal protein uS15 family. In terms of assembly, part of the 30S ribosomal subunit. Forms a bridge to the 50S subunit in the 70S ribosome, contacting the 23S rRNA.

Functionally, one of the primary rRNA binding proteins, it binds directly to 16S rRNA where it helps nucleate assembly of the platform of the 30S subunit by binding and bridging several RNA helices of the 16S rRNA. In terms of biological role, forms an intersubunit bridge (bridge B4) with the 23S rRNA of the 50S subunit in the ribosome. The protein is Small ribosomal subunit protein uS15 of Pelotomaculum thermopropionicum (strain DSM 13744 / JCM 10971 / SI).